Consider the following 1958-residue polypeptide: Echinoderm microtubule-associated protein-like 6 (1958 aa).

10 WD repeats span residues 59-100 (GHND…TVSI), 104-145 (VHTH…LLAS), 148-187 (GHSD…LTAK), 195-233 (GDLQ…RTIQ), 235-273 (AHSA…TKID), 280-321 (GYKG…LILQ), 323-362 (HCEG…LIAR), 364-403 (NMEE…EVVH), 406-445 (DRKE…KKIG), and 561-601 (GHSA…VSNG). A disordered region spans residues 604–627 (ETTPQEGGADSYSEESDSDFSDVP). Acidic residues predominate over residues 615-627 (YSEESDSDFSDVP). WD repeat units lie at residues 725 to 766 (GHDD…CLSL), 770 to 811 (HHQR…KIAT), 814 to 853 (GHKD…FTSK), 861 to 900 (GKLE…KTVK), 901 to 940 (AHDG…KTYA), 996 to 1035 (HMEG…RMLA), 1038 to 1077 (KLKK…DMLS), 1080 to 1120 (HRKE…RVGI), 1191 to 1230 (SDVT…QHAR), and 1236 to 1276 (GHSA…TQES). The segment covering 1322-1337 (KPHQQLKEVSMEERPP) has biased composition (basic and acidic residues). The interval 1322 to 1352 (KPHQQLKEVSMEERPPVSRAAPQPEKLQKNN) is disordered. 10 WD repeats span residues 1412–1456 (EHTD…TLSM), 1460–1501 (FHTK…KVAS), 1504–1543 (GHLE…LLYK), 1553–1591 (AKMQ…RLVA), 1593–1638 (AHTG…CRAF), 1685–1724 (HMEG…LLNK), 1726–1767 (NLGH…GKKR), 1768–1807 (DRKS…SLNR), 1880–1919 (ADKA…KFAK), and 1925–1958 (GHSA…WRCL).

This sequence belongs to the WD repeat EMAP family.

Its subcellular location is the cytoplasm. It is found in the cytoskeleton. Its function is as follows. May modify the assembly dynamics of microtubules, such that microtubules are slightly longer, but more dynamic. In Mus musculus (Mouse), this protein is Echinoderm microtubule-associated protein-like 6 (Eml6).